The following is a 236-amino-acid chain: E3 ubiquitin-protein ligase RNF187 (236 aa).

The segment at 12–53 (CALCQRAPREPVRADCGHRFCRACVVRFWAEEDGPFPCPECA) adopts an RING-type zinc-finger fold. Asymmetric dimethylarginine; by PRMT1 occurs at positions 98 and 109. A Glycyl lysine isopeptide (Lys-Gly) (interchain with G-Cter in ubiquitin) cross-link involves residue Lys195. Ser200 carries the phosphoserine modification. Residues Lys224 and Lys225 each participate in a glycyl lysine isopeptide (Lys-Gly) (interchain with G-Cter in ubiquitin) cross-link.

Homodimer. Interacts with JUN, independently of JUN phosphorylation. Interacts (via C-terminus) with TRIM7. In terms of processing, ubiquitinated; undergoes 'Lys-48'-linked autoubiquitination in the absence of growth factors and MAP3K1-induced 'Lys-63'-linked polyubiquitination. 'Lys-48'-autoubiquitination leads to degradation by the proteasome, while MAP3K1-induced 'Lys-63'-linked polyubiquitination results in the stabilization of the protein. 'Lys-48'- and 'Lys-63'-linked polyubiquitinations occur most probably on the same 3 C-terminal lysine residues (Lys-195, Lys-224 and Lys-225) and are thus mutually exclusive. Other sites of ubiquitination are not excluded. 'Lys-63'-linked polyubiquitination by TRIM7 in response to growth factor signaling via the MEK/ERK pathway enhances protein stability. Post-translationally, arginine methylation by PRMT1 stabilizes RNF187 by facilitating K63-linked ubiquitin chain formation, and enables dimerization, c-Jun interaction and subsequent AP1 target gene expression.

It localises to the cytoplasm. The protein resides in the nucleus. The catalysed reaction is S-ubiquitinyl-[E2 ubiquitin-conjugating enzyme]-L-cysteine + [acceptor protein]-L-lysine = [E2 ubiquitin-conjugating enzyme]-L-cysteine + N(6)-ubiquitinyl-[acceptor protein]-L-lysine.. Its pathway is protein modification; protein ubiquitination. Functionally, E3 ubiquitin-protein ligase that acts as a coactivator of JUN-mediated gene activation in response to growth factor signaling via the MAP3K1 pathway, independently from MAPK8. The protein is E3 ubiquitin-protein ligase RNF187 (Rnf187) of Mus musculus (Mouse).